We begin with the raw amino-acid sequence, 136 residues long: MDWGIIIKIFSNIKGGGDHLKKVTILKASILFLAIASFHLFSIPHAFDIGHHYKAVADQQEMHEMKAGQNADDEKKSITGAFTLTALWAMAVLLLTAESKSTGYSRRRQRKKSFILAKFYQSSYFGKLHVQHHPIM.

2 helical membrane-spanning segments follow: residues 25-47 and 78-97; these read ILKA…PHAF and ITGA…LLTA.

It localises to the cell membrane. This is an uncharacterized protein from Bacillus subtilis (strain 168).